Consider the following 309-residue polypeptide: MEIQFLGTGAGQPAKARNVSSLVLKLLDELNEIWMFDCGEGTQRQILETTIKPRKIRKIFITHLHGDHVFGLPGFLSSRAFQANDEQTDVDIYGPVGIKHLVMASIRTSGAHLPYHIHFHEFDAKHLGKILETDKFMVYAEKLDHTIFCVGYRVVQKDLEGTLDAEKLKAAGLPFGPLFGRVKNGQDVVLEDGTTIIAKDYISAPKKGKVITILGDTRKTDASIRLALGADVLVHESTYSKGDENLARRHGHSTNTEAARVAKAASVKKLLLNHISARFLSHDISRMRDDAQEIFTDVHIVRDLEEVKL.

Zn(2+) is bound by residues histidine 63, histidine 65, aspartate 67, histidine 68, histidine 145, aspartate 216, and histidine 274. Aspartate 67 serves as the catalytic Proton acceptor.

It belongs to the RNase Z family. As to quaternary structure, homodimer. Requires Zn(2+) as cofactor.

It catalyses the reaction Endonucleolytic cleavage of RNA, removing extra 3' nucleotides from tRNA precursor, generating 3' termini of tRNAs. A 3'-hydroxy group is left at the tRNA terminus and a 5'-phosphoryl group is left at the trailer molecule.. Functionally, zinc phosphodiesterase, which displays some tRNA 3'-processing endonuclease activity. Probably involved in tRNA maturation, by removing a 3'-trailer from precursor tRNA. In Streptococcus mutans serotype c (strain ATCC 700610 / UA159), this protein is Ribonuclease Z.